The following is a 431-amino-acid chain: Histidinol dehydrogenase (431 aa).

The NAD(+) site is built by tyrosine 130, glutamine 191, and asparagine 214. Serine 237, glutamine 259, and histidine 262 together coordinate substrate. 2 residues coordinate Zn(2+): glutamine 259 and histidine 262. Active-site proton acceptor residues include glutamate 327 and histidine 328. Residues histidine 328, aspartate 361, glutamate 415, and histidine 420 each coordinate substrate. A Zn(2+)-binding site is contributed by aspartate 361. A Zn(2+)-binding site is contributed by histidine 420.

Belongs to the histidinol dehydrogenase family. The cofactor is Zn(2+).

It catalyses the reaction L-histidinol + 2 NAD(+) + H2O = L-histidine + 2 NADH + 3 H(+). The protein operates within amino-acid biosynthesis; L-histidine biosynthesis; L-histidine from 5-phospho-alpha-D-ribose 1-diphosphate: step 9/9. Catalyzes the sequential NAD-dependent oxidations of L-histidinol to L-histidinaldehyde and then to L-histidine. This Syntrophotalea carbinolica (strain DSM 2380 / NBRC 103641 / GraBd1) (Pelobacter carbinolicus) protein is Histidinol dehydrogenase.